The primary structure comprises 101 residues: Conopressin/conophysin, isoform 3 (101 aa).

Alanine 1 is a signal peptide. A disulfide bond links cysteine 2 and cysteine 7. Residue glycine 10 is modified to Glycine amide. A propeptide spanning residues 11-18 (GKRNVDEG) is cleaved from the precursor. 7 disulfide bridges follow: cysteine 23–cysteine 63, cysteine 26–cysteine 37, cysteine 31–cysteine 53, cysteine 38–cysteine 43, cysteine 70–cysteine 88, cysteine 82–cysteine 100, and cysteine 89–cysteine 94.

Belongs to the vasopressin/oxytocin family. As to expression, expressed by the venom gland.

Its subcellular location is the secreted. Functionally, targets vasopressin-oxytocin related receptors. Is more active on fish receptors than on their human counterparts, supporting an evolved role of this conopressin in the envenomation process. Acts as an agonist on zebrafish vasopressin receptors V1a1R (EC(50)=10.6 nM), V1a2R (EC(50)=44.06 nM, partial agonist), V2R (EC(50)=299.2 nM) and oxytocin receptor (EC(50)=353.73 nM, partial agonist). Shows a weaker activity on human receptors AVPR1B (EC(50)=51.92 nM), AVPR1A (EC(50)=123.78 nM), AVPR2 (EC(50)=299.2 nM) and oxytocin (OXTR) receptor (EC(50)=455.66 nM, partial agonist). In vivo, exhibits grooming and scratching behavior in mice, following intracerebral injection. The protein is Conopressin/conophysin, isoform 3 of Conus monile (Necklace cone).